Reading from the N-terminus, the 389-residue chain is Succinate--CoA ligase [ADP-forming] subunit beta (389 aa).

One can recognise an ATP-grasp domain in the interval 9–244 (KQLFADYGLP…PSQEDERERR (236 aa)). ATP contacts are provided by residues Lys46, 53-55 (GRG), Glu99, Thr102, and Glu107. The Mg(2+) site is built by Asn199 and Asp213. Substrate contacts are provided by residues Asn264 and 321–323 (GIV).

The protein belongs to the succinate/malate CoA ligase beta subunit family. Heterotetramer of two alpha and two beta subunits. Requires Mg(2+) as cofactor.

It catalyses the reaction succinate + ATP + CoA = succinyl-CoA + ADP + phosphate. It carries out the reaction GTP + succinate + CoA = succinyl-CoA + GDP + phosphate. It functions in the pathway carbohydrate metabolism; tricarboxylic acid cycle; succinate from succinyl-CoA (ligase route): step 1/1. Functionally, succinyl-CoA synthetase functions in the citric acid cycle (TCA), coupling the hydrolysis of succinyl-CoA to the synthesis of either ATP or GTP and thus represents the only step of substrate-level phosphorylation in the TCA. The beta subunit provides nucleotide specificity of the enzyme and binds the substrate succinate, while the binding sites for coenzyme A and phosphate are found in the alpha subunit. This Alcanivorax borkumensis (strain ATCC 700651 / DSM 11573 / NCIMB 13689 / SK2) protein is Succinate--CoA ligase [ADP-forming] subunit beta.